Reading from the N-terminus, the 478-residue chain is tRNA-2-methylthio-N(6)-dimethylallyladenosine synthase (478 aa).

In terms of domain architecture, MTTase N-terminal spans 39–157; the sequence is KLVFTQTFGC…FPQLLTESIN (119 aa). [4Fe-4S] cluster contacts are provided by C48, C84, C118, C194, C198, and C201. The Radical SAM core domain occupies 180–410; sequence RKFELKAFVN…LEAVNRISAE (231 aa). Residues 410 to 477 enclose the TRAM domain; the sequence is EINDGYKDRI…TFSLNGILVN (68 aa).

Belongs to the methylthiotransferase family. MiaB subfamily. Monomer. It depends on [4Fe-4S] cluster as a cofactor.

The protein resides in the cytoplasm. It catalyses the reaction N(6)-dimethylallyladenosine(37) in tRNA + (sulfur carrier)-SH + AH2 + 2 S-adenosyl-L-methionine = 2-methylsulfanyl-N(6)-dimethylallyladenosine(37) in tRNA + (sulfur carrier)-H + 5'-deoxyadenosine + L-methionine + A + S-adenosyl-L-homocysteine + 2 H(+). Its function is as follows. Catalyzes the methylthiolation of N6-(dimethylallyl)adenosine (i(6)A), leading to the formation of 2-methylthio-N6-(dimethylallyl)adenosine (ms(2)i(6)A) at position 37 in tRNAs that read codons beginning with uridine. The sequence is that of tRNA-2-methylthio-N(6)-dimethylallyladenosine synthase from Clostridioides difficile (strain 630) (Peptoclostridium difficile).